Reading from the N-terminus, the 333-residue chain is Adenosine deaminase (333 aa).

Zn(2+)-binding residues include H12 and H14. Residues H14, D16, and G170 each coordinate substrate. H197 is a Zn(2+) binding site. E200 serves as the catalytic Proton donor. D278 is a binding site for Zn(2+). D279 is a substrate binding site.

The protein belongs to the metallo-dependent hydrolases superfamily. Adenosine and AMP deaminases family. Adenosine deaminase subfamily. Zn(2+) serves as cofactor.

The catalysed reaction is adenosine + H2O + H(+) = inosine + NH4(+). It catalyses the reaction 2'-deoxyadenosine + H2O + H(+) = 2'-deoxyinosine + NH4(+). Catalyzes the hydrolytic deamination of adenosine and 2-deoxyadenosine. This Salmonella typhi protein is Adenosine deaminase.